The following is a 155-amino-acid chain: Cytochrome c-type biogenesis protein CcmE (155 aa).

The Cytoplasmic portion of the chain corresponds to 1–8 (MNPLRKKR). The helical; Signal-anchor for type II membrane protein transmembrane segment at 9 to 29 (LLIIAALLAGVGLAMTLALGA) threads the bilayer. Residues 30-155 (LKENINLFYT…GGSSTPAKQG (126 aa)) are Periplasmic-facing. Residues H124 and Y128 each contribute to the heme site. Positions 134–155 (TKALRDSGQAAPGGSSTPAKQG) are disordered.

This sequence belongs to the CcmE/CycJ family.

Its subcellular location is the cell inner membrane. Heme chaperone required for the biogenesis of c-type cytochromes. Transiently binds heme delivered by CcmC and transfers the heme to apo-cytochromes in a process facilitated by CcmF and CcmH. In Pseudomonas savastanoi pv. phaseolicola (strain 1448A / Race 6) (Pseudomonas syringae pv. phaseolicola (strain 1448A / Race 6)), this protein is Cytochrome c-type biogenesis protein CcmE.